The following is a 1035-amino-acid chain: Cell-division control histidine kinase PdhS (1035 aa).

The segment at methionine 1–aspartate 613 is important for polar localization. Residues glutamine 500 to glutamate 533 form a disordered region. The interaction with DivK stretch occupies residues alanine 614–aspartate 1035. Residues histidine 659–valine 730 enclose the PAS domain. Positions arginine 802–arginine 1031 constitute a Histidine kinase domain. Histidine 805 bears the Phosphohistidine; by autocatalysis mark.

As to quaternary structure, interacts with DivK.

It is found in the cytoplasm. The enzyme catalyses ATP + protein L-histidine = ADP + protein N-phospho-L-histidine.. Functionally, functions as a polar differentiation marker. Essential protein that, by localizing in the old pole of dividing cells, controls cell division and maturation, probably through control of DivK phosphorylation status and cellular distribution, which in turn regulates CtrA, a transcriptional regulator of the minB operon. The asymmetrical localization of this protein is probably required for cells to enter a new division cycle. The polypeptide is Cell-division control histidine kinase PdhS (pdhS) (Brucella suis biovar 1 (strain 1330)).